We begin with the raw amino-acid sequence, 987 residues long: MELRALLCWASLATALEETLLNTKLETADLKWVTYPQAEGQWEELSGLDEEQHSVRTYEVCDMKRPGGQAHWLRTGWVPRRGAVHVYATIRFTMMECLSLPRASRSCKETFTVFYYESEADTATAHTPAWMENPYIKVDTVAAEHLTRKRPGAEATGKVNIKTLRLGPLSKAGFYLAFQDQGACMALLSLHLFYKKCSWLITNLTYFPETVPRELVVPVAGSCVANAVPTANPSPSLYCREDGQWAEQQVTGCSCAPGYEAAESNKVCRACGQGTFKPQIGDESCLPCPANSHSNNIGSPVCLCRIGYYRARSDPRSSPCTTPPSAPRSVVHHLNGSTLRLEWSAPLESGGREDLTYAVRCRECRPGGSCLPCGGDMTFDPGPRDLVEPWVAIRGLRPDVTYTFEVAALNGVSTLATGPPPFEPVNVTTDREVPPAVSDIRVTRSSPSSLILSWAIPRAPSGAVLDYEVKYHEKGAEGPSSVRFLKTSENRAELRGLKRGASYLVQVRARSEAGYGPFGQEHHSQTQLDESESWREQLALIAGTAVVGVVLVLVVVIIAVLCLRKQSNGREVEYSDKHGQYLIGHGTKVYIDPFTYEDPNEAVREFAKEIDVSYVKIEEVIGAGEFGEVCRGRLKAPGKKESCVAIKTLKGGYTERQRREFLSEASIMGQFEHPNIIRLEGVVTNSVPVMILTEFMENGALDSFLRLNDGQFTVIQLVGMLRGIASGMRYLAEMSYVHRDLAARNILVNSNLVCKVSDFGLSRFLEENSSDPTYTSSLGGKIPIRWTAPEAIAFRKFTSASDAWSYGIVMWEVMSFGERPYWDMSNQDVINAIEQDYRLPPPPDCPTSLHQLMLDCWQKDRNARPRFPQVVSALDKMIRNPASLKIVARENGGASHPLLDQRQPHYSAFGSVGEWLRAIKMGRYEESFAAAGFGSFEVVSQISAEDLLRIGVTLAGHQKKILASVQHMKSQAKPGAPGGTGGPAQQF.

An N-terminal signal peptide occupies residues 1–15 (MELRALLCWASLATA). Over 16–539 (LEETLLNTKL…ESESWREQLA (524 aa)) the chain is Extracellular. Positions 17-202 (EETLLNTKLE…FYKKCSWLIT (186 aa)) constitute an Eph LBD domain. 2 disulfide bridges follow: cysteine 61–cysteine 184 and cysteine 97–cysteine 107. Residues asparagine 203, asparagine 335, and asparagine 426 are each glycosylated (N-linked (GlcNAc...) asparagine). Fibronectin type-III domains follow at residues 323-432 (PPSA…TDRE) and 436-529 (AVSD…TQLD). A helical membrane pass occupies residues 540–560 (LIAGTAVVGVVLVLVVVIIAV). At 561 to 987 (LCLRKQSNGR…GGTGGPAQQF (427 aa)) the chain is on the cytoplasmic side. Positions 615 to 899 (VKIEEVIGAG…ENGGASHPLL (285 aa)) constitute a Protein kinase domain. Residues 621-629 (IGAGEFGEV) and lysine 647 each bind ATP. Aspartate 740 (proton acceptor) is an active-site residue. Phosphoserine occurs at positions 769, 770, 911, and 943. The SAM domain maps to 907–971 (SAFGSVGEWL…LASVQHMKSQ (65 aa)). Residues 965–987 (VQHMKSQAKPGAPGGTGGPAQQF) form a disordered region. The span at 976-987 (APGGTGGPAQQF) shows a compositional bias: gly residues. Residues 985–987 (QQF) carry the PDZ-binding motif.

It belongs to the protein kinase superfamily. Tyr protein kinase family. Ephrin receptor subfamily. As to quaternary structure, heterotetramer upon binding of the ligand. The heterotetramer is composed of an ephrin dimer and a receptor dimer. Oligomerization is probably required to induce biological responses. Interacts with RASA1; the interaction depends on EPHB4 tyrosine-phosphorylation. In terms of processing, phosphorylated; autophosphorylation is stimulated by EFNB2. In terms of tissue distribution, expressed in various organ systems, including lung, liver, kidney, intestine, muscle and heart. Expressed in myogenic progenitor cells.

It is found in the cell membrane. It catalyses the reaction L-tyrosyl-[protein] + ATP = O-phospho-L-tyrosyl-[protein] + ADP + H(+). Functionally, receptor tyrosine kinase which binds promiscuously transmembrane ephrin-B family ligands residing on adjacent cells, leading to contact-dependent bidirectional signaling into neighboring cells. The signaling pathway downstream of the receptor is referred to as forward signaling while the signaling pathway downstream of the ephrin ligand is referred to as reverse signaling. Together with its cognate ligand/functional ligand EFNB2 it is involved in the regulation of cell adhesion and migration, and plays a central role in heart morphogenesis, angiogenesis and blood vessel remodeling and permeability. EPHB4-mediated forward signaling controls cellular repulsion and segregation from EFNB2-expressing cells. This is Ephrin type-B receptor 4 (Ephb4) from Mus musculus (Mouse).